Consider the following 443-residue polypeptide: Glutamine synthetase (443 aa).

A GS beta-grasp domain is found at 16 to 101 (NGVKFIRLQF…LICDVYKPDG (86 aa)). A GS catalytic domain is found at 108-443 (PRHVLKRANA…WELENYLNKY (336 aa)). Glu131 and Glu133 together coordinate Mg(2+). Glu183 is a binding site for ATP. Mg(2+) contacts are provided by Glu188 and Glu195. L-glutamate-binding positions include 239–240 (NG) and Gly240. His244 provides a ligand contact to Mg(2+). Residue Ser248 coordinates ATP. The L-glutamate site is built by Arg297, Glu303, and Arg315. ATP-binding residues include Arg315 and Arg320. Glu332 contributes to the Mg(2+) binding site. Arg334 lines the L-glutamate pocket.

This sequence belongs to the glutamine synthetase family. As to quaternary structure, oligomer of 12 subunits arranged in the form of two hexagons. In its feedback-inhibited form, interacts with TnrA in order to block its DNA-binding activity. Mg(2+) is required as a cofactor.

The protein resides in the cytoplasm. It catalyses the reaction L-glutamate + NH4(+) + ATP = L-glutamine + ADP + phosphate + H(+). Inhibited by glutamine. Its function is as follows. Glutamine synthetase (GS) is an unusual multitasking protein that functions as an enzyme, a transcription coregulator, and a chaperone in ammonium assimilation and in the regulation of genes involved in nitrogen metabolism. It catalyzes the ATP-dependent biosynthesis of glutamine from glutamate and ammonia. Feedback-inhibited GlnA also interacts with and regulates the activity of the transcriptional regulator TnrA. During nitrogen limitation, TnrA is in its DNA-binding active state and turns on the transcription of genes required for nitrogen assimilation. Under conditions of nitrogen excess, feedback-inhibited GlnA forms a stable complex with TnrA, which inhibits its DNA-binding activity. In contrast, feedback-inhibited GlnA acts as a chaperone to stabilize the DNA-binding activity of GlnR, which represses the transcription of nitrogen assimilation genes. The sequence is that of Glutamine synthetase from Clostridium saccharobutylicum.